We begin with the raw amino-acid sequence, 1132 residues long: Tyrosine-protein kinase JAK2 (1132 aa).

The tract at residues 1 to 239 is interaction with cytokine/interferon/growth hormone receptors; sequence MGMACLTMTE…RYRFRRFIQQ (239 aa). In terms of domain architecture, FERM spans 37 to 380; it reads PVLLVYLYHS…GYYRLTADAH (344 aa). Y119 is subject to Phosphotyrosine; by autocatalysis. Residues Y372 and Y373 each carry the phosphotyrosine modification. Positions 401 to 482 constitute an SH2; atypical domain; the sequence is HGPISMDFAI…SLKDLLNCYQ (82 aa). Position 523 is a phosphoserine (S523). A Protein kinase 1 domain is found at 545 to 809; it reads LIFNESLGQG…AIIRDLNSLF (265 aa). 2 positions are modified to phosphotyrosine: Y570 and Y813. A Protein kinase 2 domain is found at 849 to 1126; it reads LKFLQQLGKG…RDLALRVDQI (278 aa). 855–863 is a binding site for ATP; it reads LGKGNFGSV. At Y868 the chain carries Phosphotyrosine; by autocatalysis. K882 contributes to the ATP binding site. Y966 and Y972 each carry phosphotyrosine; by autocatalysis. D976 acts as the Proton acceptor in catalysis. 2 positions are modified to phosphotyrosine; by autocatalysis: Y1007 and Y1008.

Belongs to the protein kinase superfamily. Tyr protein kinase family. JAK subfamily. As to quaternary structure, interacts with IL23R, SKB1 and STAM2. Interacts with EPOR. Interacts with LYN. Interacts with SIRPA. Interacts with SH2B1. Interacts with TEC. Interacts with IFNGR2 (via intracellular domain). Interacts with LEPR (Isoform B). Interacts with HSP90AB1; promotes functional activation in a heat shock-dependent manner. Interacts with STRA6. Interacts with RHEX; this interaction occurs in a erythropoietin (EPO)-dependent manner. Interacts with ASB2; the interaction targets JAK2 for Notch-induced proteasomal degradation. Mg(2+) is required as a cofactor. In terms of processing, autophosphorylated, leading to regulate its activity. Leptin promotes phosphorylation on tyrosine residues, including phosphorylation on Tyr-813. Autophosphorylation on Tyr-119 in response to EPO down-regulates its kinase activity. Autophosphorylation on Tyr-868, Tyr-966 and Tyr-972 in response to growth hormone (GH) are required for maximal kinase activity. Also phosphorylated by TEC. Phosphorylated on tyrosine residues in response to interferon gamma signaling. Phosphorylated on tyrosine residues in response to a signaling cascade that is activated by increased cellular retinol. Post-translationally, undergoes Notch-induced ubiquitination and subsequent proteasomal degradation which is mediated by ASB1 or ASB2, the substrate-recognition components of probable ECS E3 ubiquitin-protein ligase complexes.

It localises to the endomembrane system. It is found in the cytoplasm. The protein localises to the nucleus. The enzyme catalyses L-tyrosyl-[protein] + ATP = O-phospho-L-tyrosyl-[protein] + ADP + H(+). Its activity is regulated as follows. Regulated by autophosphorylation, can both activate or decrease activity. Heme regulates its activity by enhancing the phosphorylation on Tyr-1007 and Tyr-1008. Its function is as follows. Non-receptor tyrosine kinase involved in various processes such as cell growth, development, differentiation or histone modifications. Mediates essential signaling events in both innate and adaptive immunity. In the cytoplasm, plays a pivotal role in signal transduction via its association with type I receptors such as growth hormone (GHR), prolactin (PRLR), leptin (LEPR), erythropoietin (EPOR), thrombopoietin (THPO); or type II receptors including IFN-alpha, IFN-beta, IFN-gamma and multiple interleukins. Following ligand-binding to cell surface receptors, phosphorylates specific tyrosine residues on the cytoplasmic tails of the receptor, creating docking sites for STATs proteins. Subsequently, phosphorylates the STATs proteins once they are recruited to the receptor. Phosphorylated STATs then form homodimer or heterodimers and translocate to the nucleus to activate gene transcription. For example, cell stimulation with erythropoietin (EPO) during erythropoiesis leads to JAK2 autophosphorylation, activation, and its association with erythropoietin receptor (EPOR) that becomes phosphorylated in its cytoplasmic domain. Then, STAT5 (STAT5A or STAT5B) is recruited, phosphorylated and activated by JAK2. Once activated, dimerized STAT5 translocates into the nucleus and promotes the transcription of several essential genes involved in the modulation of erythropoiesis. Part of a signaling cascade that is activated by increased cellular retinol and that leads to the activation of STAT5 (STAT5A or STAT5B). In addition, JAK2 mediates angiotensin-2-induced ARHGEF1 phosphorylation. Plays a role in cell cycle by phosphorylating CDKN1B. Cooperates with TEC through reciprocal phosphorylation to mediate cytokine-driven activation of FOS transcription. In the nucleus, plays a key role in chromatin by specifically mediating phosphorylation of 'Tyr-41' of histone H3 (H3Y41ph), a specific tag that promotes exclusion of CBX5 (HP1 alpha) from chromatin. Up-regulates the potassium voltage-gated channel activity of KCNA3. In Pongo abelii (Sumatran orangutan), this protein is Tyrosine-protein kinase JAK2.